We begin with the raw amino-acid sequence, 355 residues long: Protein RecA (355 aa).

65-72 (GPESSGKT) contacts ATP.

The protein belongs to the RecA family.

The protein resides in the cytoplasm. Its function is as follows. Can catalyze the hydrolysis of ATP in the presence of single-stranded DNA, the ATP-dependent uptake of single-stranded DNA by duplex DNA, and the ATP-dependent hybridization of homologous single-stranded DNAs. It interacts with LexA causing its activation and leading to its autocatalytic cleavage. The protein is Protein RecA of Pseudomonas putida (Arthrobacter siderocapsulatus).